The chain runs to 1133 residues: Early transcription factor large subunit homolog (1133 aa).

The Helicase ATP-binding domain occupies 52-352 (KGGRAFFPCD…PNGQPLQRQQ (301 aa)). 99–106 (WQTGTGKS) contacts ATP. Positions 281-284 (DEIH) match the DEAH box motif. One can recognise a Helicase C-terminal domain in the interval 524 to 724 (MMKDILSIIR…EGDKALRKHA (201 aa)).

This sequence belongs to the DEAD box helicase family. DEAH subfamily.

It localises to the virion. The enzyme catalyses ATP + H2O = ADP + phosphate + H(+). In terms of biological role, putative initation factor. This is Early transcription factor large subunit homolog from Ornithodoros (relapsing fever ticks).